The primary structure comprises 733 residues: Zinc finger transcription factor ace1 (733 aa).

Basic residues predominate over residues 1–11 (MSFSNPRRRTP). 3 disordered regions span residues 1-22 (MSFS…CEHG), 34-63 (GATF…SQSA), and 89-183 (ASLS…SSTT). Low complexity predominate over residues 39–49 (SPTSPSASSAA). The span at 132-142 (LRPRSVRRTRN) shows a compositional bias: basic residues. Residues 148-158 (GIGSSVVSTND) show a composition bias toward polar residues. The span at 171 to 183 (ASALTRSAASSTT) shows a compositional bias: low complexity. 3 consecutive C2H2-type zinc fingers follow at residues 400 to 424 (KKCR…EKTH), 428 to 456 (WKCP…NDKH), and 463 to 488 (YECL…EKAH). The disordered stretch occupies residues 497–533 (TNGKKAPSQNGSTAQQTPPLANVSTPSSTPSYSVPTP). Positions 503–515 (PSQNGSTAQQTPP) are enriched in polar residues. The span at 519 to 530 (VSTPSSTPSYSV) shows a compositional bias: low complexity.

Its subcellular location is the nucleus. In terms of biological role, binds to the promoter of the cbh1 gene and activates transcription. The sequence is that of Zinc finger transcription factor ace1 (ace1) from Hypocrea jecorina (Trichoderma reesei).